Reading from the N-terminus, the 377-residue chain is tRNA-specific 2-thiouridylase MnmA (377 aa).

ATP is bound by residues 8–15 (GMSGGVDS) and M34. Positions 94–96 (NPD) are interaction with target base in tRNA. Residue C99 is the Nucleophile of the active site. C99 and C201 are disulfide-bonded. G123 contributes to the ATP binding site. Positions 151-153 (KDQ) are interaction with tRNA. Residue C201 is the Cysteine persulfide intermediate of the active site. The tract at residues 315–316 (RY) is interaction with tRNA.

The protein belongs to the MnmA/TRMU family.

It is found in the cytoplasm. The catalysed reaction is S-sulfanyl-L-cysteinyl-[protein] + uridine(34) in tRNA + AH2 + ATP = 2-thiouridine(34) in tRNA + L-cysteinyl-[protein] + A + AMP + diphosphate + H(+). Catalyzes the 2-thiolation of uridine at the wobble position (U34) of tRNA, leading to the formation of s(2)U34. The polypeptide is tRNA-specific 2-thiouridylase MnmA (Acinetobacter baumannii (strain ACICU)).